Consider the following 76-residue polypeptide: MSWYEKYNIVLNPPKRCSSACADNLTTILAEDGNHIRAILYSQPKKLKILQDFLATSRNKMFLYKILDDEIRRVLT.

A disulfide bridge connects residues Cys17 and Cys21.

It belongs to the orthopoxvirus OPG128 family. As to quaternary structure, interacts with sulfhydryl oxidase OPG072; this interaction involves formation of a transient disulfide-bonded intermediate, allowing disulfide bond transfer. Interacts with OPG088; this interaction involves formation of a transient disulfide-bonded intermediate, allowing disulfide bond transfer.

Late protein which probably participates in disulfide bond formation by functioning as a thiol-disulfide transfer protein between membrane-associated OPG072 and OPG08. The complete pathway for formation of disulfide bonds in intracellular virion membrane proteins sequentially involves oxidation of OPG072, OPG128 and OPG08. The chain is Protein OPG128 (OPG128) from Homo sapiens (Human).